Here is a 147-residue protein sequence, read N- to C-terminus: MLMNEFEKACETLRKFMAYMLEKDMKSWTELWDENAVFEFPYAPEGSPKRIEGKAAIYDYIKDYPKQIHLSSFTAPTVYRSADSNTVIAEFQCDGHVIETGLPYRQSYISVIETRDGRIVRYRDYWNPLVVKEAFGGSFLQTEESGK.

Belongs to the limonene-1,2-epoxide hydrolase family.

This is an uncharacterized protein from Bacillus subtilis (strain 168).